A 508-amino-acid chain; its full sequence is Maturase K (508 aa).

It belongs to the intron maturase 2 family. MatK subfamily.

The protein localises to the plastid. It is found in the chloroplast. Functionally, usually encoded in the trnK tRNA gene intron. Probably assists in splicing its own and other chloroplast group II introns. The polypeptide is Maturase K (Collinsia heterophylla (Purple Chinese houses)).